A 152-amino-acid polypeptide reads, in one-letter code: Aspartate carbamoyltransferase regulatory chain (152 aa).

Residues C109, C114, C138, and C141 each contribute to the Zn(2+) site.

This sequence belongs to the PyrI family. In terms of assembly, contains catalytic and regulatory chains. It depends on Zn(2+) as a cofactor.

In terms of biological role, involved in allosteric regulation of aspartate carbamoyltransferase. The sequence is that of Aspartate carbamoyltransferase regulatory chain from Proteus mirabilis (strain HI4320).